We begin with the raw amino-acid sequence, 206 residues long: Histidine biosynthesis bifunctional protein HisIE (206 aa).

The tract at residues 1 to 117 (MGSNEVATGD…SCFPSAPGQF (117 aa)) is phosphoribosyl-AMP cyclohydrolase. Residues 118–206 (LGSLDALVAE…AAALLESRHQ (89 aa)) form a phosphoribosyl-ATP pyrophosphohydrolase region.

The protein in the N-terminal section; belongs to the PRA-CH family. This sequence in the C-terminal section; belongs to the PRA-PH family.

It is found in the cytoplasm. The enzyme catalyses 1-(5-phospho-beta-D-ribosyl)-ATP + H2O = 1-(5-phospho-beta-D-ribosyl)-5'-AMP + diphosphate + H(+). The catalysed reaction is 1-(5-phospho-beta-D-ribosyl)-5'-AMP + H2O = 1-(5-phospho-beta-D-ribosyl)-5-[(5-phospho-beta-D-ribosylamino)methylideneamino]imidazole-4-carboxamide. It functions in the pathway amino-acid biosynthesis; L-histidine biosynthesis; L-histidine from 5-phospho-alpha-D-ribose 1-diphosphate: step 2/9. Its pathway is amino-acid biosynthesis; L-histidine biosynthesis; L-histidine from 5-phospho-alpha-D-ribose 1-diphosphate: step 3/9. The sequence is that of Histidine biosynthesis bifunctional protein HisIE from Xanthomonas axonopodis pv. citri (strain 306).